We begin with the raw amino-acid sequence, 424 residues long: GTPase Obg (424 aa).

Residues 1 to 158 (MFIDTAKILV…RMINLEIKLL (158 aa)) form the Obg domain. One can recognise an OBG-type G domain in the interval 159 to 331 (ADVGLIGFPN…LIKEVTRQLS (173 aa)). GTP is bound by residues 165–172 (GFPNVGKS), 190–194 (FTTLK), 212–215 (DIPG), 282–285 (NKID), and 312–314 (SAA). 2 residues coordinate Mg(2+): Ser172 and Thr192. Residues 345-424 (RFMPEEKRFT…LNDFEFDFLL (80 aa)) form the OCT domain.

The protein belongs to the TRAFAC class OBG-HflX-like GTPase superfamily. OBG GTPase family. In terms of assembly, monomer. It depends on Mg(2+) as a cofactor.

It localises to the cytoplasm. Functionally, an essential GTPase which binds GTP, GDP and possibly (p)ppGpp with moderate affinity, with high nucleotide exchange rates and a fairly low GTP hydrolysis rate. Plays a role in control of the cell cycle, stress response, ribosome biogenesis and in those bacteria that undergo differentiation, in morphogenesis control. The protein is GTPase Obg of Clostridium novyi (strain NT).